Consider the following 95-residue polypeptide: NATGQGNISISLVPPSKAVEXHQXQQIFIEAKASKIFNCRMEWEKVERGRRTSLCTHDPAKICSRDHAQSSATWSCSQPFKVVCVYIAFYSTDYR.

N1 and N7 each carry an N-linked (GlcNAc...) asparagine glycan. The III stretch occupies residues 1-21 (NATGQGNISISLVPPSKAVEX). The interval 22–30 (HQXQQIFIE) is IV (linker domain). A v (Cys-rich) region spans residues 31–95 (AKASKIFNCR…YIAFYSTDYR (65 aa)).

Belongs to the neurexophilin family.

It localises to the secreted. Functionally, may be signaling molecules that resemble neuropeptides. Ligand for alpha-neurexins. In Macaca mulatta (Rhesus macaque), this protein is Neurexophilin-3 (NXPH3).